The following is a 385-amino-acid chain: Proliferation-associated protein A (385 aa).

It belongs to the peptidase M24 family.

The chain is Proliferation-associated protein A (prlA) from Dictyostelium discoideum (Social amoeba).